The chain runs to 551 residues: Arginine--tRNA ligase (551 aa).

The 'HIGH' region motif lies at Ala123–Arg133.

It belongs to the class-I aminoacyl-tRNA synthetase family. Monomer.

Its subcellular location is the cytoplasm. The enzyme catalyses tRNA(Arg) + L-arginine + ATP = L-arginyl-tRNA(Arg) + AMP + diphosphate. The sequence is that of Arginine--tRNA ligase from Chlorobaculum tepidum (strain ATCC 49652 / DSM 12025 / NBRC 103806 / TLS) (Chlorobium tepidum).